A 382-amino-acid chain; its full sequence is Histone acetyltransferase type B subunit 2 (382 aa).

WD repeat units lie at residues 98 to 138 (ENNA…RYSH), 141 to 181 (PHTK…TTFK), 184 to 224 (IQKD…VVSQ), 228 to 268 (ESSN…ENSG), and 275 to 315 (GHSE…EEQQ). Residues 317-321 (EDAED) are interaction with the histone H4 N-terminus. Residues 332–372 (GHTAGVSDLSWCPFKDWMIGSVADDNIVHLWEISKKLITNE) form a WD 6 repeat.

This sequence belongs to the WD repeat RBAP46/RBAP48/MSI1 family. Component of the HAT-B complex composed of at least HAT1 and HAT2. The HAT-B complex binds to histone H4 tail.

Its subcellular location is the cytoplasm. The protein localises to the nucleus. Functionally, regulatory subunit of the histone acetylase B (HAT-B) complex. The complex acetylates 'Lys-14' of histone H4 which is required for telomeric silencing. The sequence is that of Histone acetyltransferase type B subunit 2 (HAT2) from Candida albicans (strain SC5314 / ATCC MYA-2876) (Yeast).